Reading from the N-terminus, the 151-residue chain is Ubiquitin-conjugating enzyme E2 2 (151 aa).

Positions 1-26 are disordered; it reads MSTTARRRLMRDFKRMQQDPPQGVSA. The UBC core domain occupies 4–150; it reads TARRRLMRDF…VRDTVEASWT (147 aa). The active-site Glycyl thioester intermediate is cysteine 88.

Belongs to the ubiquitin-conjugating enzyme family.

It localises to the cytoplasm. The protein resides in the nucleus. The catalysed reaction is S-ubiquitinyl-[E1 ubiquitin-activating enzyme]-L-cysteine + [E2 ubiquitin-conjugating enzyme]-L-cysteine = [E1 ubiquitin-activating enzyme]-L-cysteine + S-ubiquitinyl-[E2 ubiquitin-conjugating enzyme]-L-cysteine.. It participates in protein modification; protein ubiquitination. Catalyzes the covalent attachment of ubiquitin to other proteins. Plays a role in transcription regulation by catalyzing the monoubiquitination of histone H2B to form H2BK123ub1. H2BK123ub1 gives a specific tag for epigenetic transcriptional activation and is also a prerequisite for H3K4me and H3K79me formation. Also involved in postreplication repair of UV-damaged DNA, in N-end rule-dependent protein degradation and in sporulation. The sequence is that of Ubiquitin-conjugating enzyme E2 2 (UBC2) from Yarrowia lipolytica (strain CLIB 122 / E 150) (Yeast).